The sequence spans 439 residues: 2-(3-amino-3-carboxypropyl)histidine synthase subunit 1 (439 aa).

The tract at residues 11–54 (STTATPVAPCDPDTCKKSTSTQPRKRFVGRANGSGPSASTSLVK) is disordered. The segment covering 44 to 54 (SGPSASTSLVK) has biased composition (polar residues). [4Fe-4S] cluster contacts are provided by Cys147, Cys251, and Cys380.

The protein belongs to the DPH1/DPH2 family. DPH1 subfamily. Component of the 2-(3-amino-3-carboxypropyl)histidine synthase complex composed of DPH1, DPH2, DPH3 and a NADH-dependent reductase, predominantly CBR1. It depends on [4Fe-4S] cluster as a cofactor.

The protein localises to the cytoplasm. It carries out the reaction L-histidyl-[translation elongation factor 2] + S-adenosyl-L-methionine = 2-[(3S)-amino-3-carboxypropyl]-L-histidyl-[translation elongation factor 2] + S-methyl-5'-thioadenosine + H(+). It functions in the pathway protein modification; peptidyl-diphthamide biosynthesis. Catalyzes the first step of diphthamide biosynthesis, a post-translational modification of histidine which occurs in elongation factor 2. DPH1 and DPH2 transfer a 3-amino-3-carboxypropyl (ACP) group from S-adenosyl-L-methionine (SAM) to a histidine residue, the reaction is assisted by a reduction system comprising DPH3 and a NADH-dependent reductase, predominantly CBR1. The chain is 2-(3-amino-3-carboxypropyl)histidine synthase subunit 1 (DPH1) from Yarrowia lipolytica (strain CLIB 122 / E 150) (Yeast).